The primary structure comprises 174 residues: Isomerase prhC (174 aa).

Belongs to the trt14 isomerase family. Homodimer.

The protein operates within secondary metabolite biosynthesis; terpenoid biosynthesis. In terms of biological role, isomerase; part of the gene cluster that mediates the biosynthesis of paraherquonin, a meroterpenoid with a unique, highly congested hexacyclic molecular architecture. The first step of the pathway is the synthesis of 3,5-dimethylorsellinic acid (DMOA) by the polyketide synthase prhL. Synthesis of DMOA is followed by farnesylation by the prenyltransferase prhE, methylesterification by the methyl-transferase prhM, epoxidation of the prenyl chain by the flavin-dependent monooxygenase prhF, and cyclization of the farnesyl moiety by the terpene cyclase prhH, to yield the tetracyclic intermediate, protoaustinoid A. The short chain dehydrogenase prhI then oxidizes the C-3 alcohol group of the terpene cyclase product to transform protoaustinoid A into protoaustinoid B. The FAD-binding monooxygenase prhJ catalyzes the oxidation of protoaustinoid B into preaustinoid A which is further oxidized into preaustinoid A1 by FAD-binding monooxygenase phrK. Finally, prhA leads to berkeleydione via the berkeleyone B intermediate. PrhA is a multifunctional dioxygenase that first desaturates at C5-C6 to form berkeleyone B, followed by rearrangement of the A/B-ring to form the cycloheptadiene moiety in berkeleydione. Berkeleydione serves as the key intermediate for the biosynthesis of paraherquonin as well as many other meroterpenoids. The cytochrome P450 monooxygenases prhB, prhD, and prhN, as well as the isomerase prhC, are probably involved in the late stage of paraherquonin biosynthesis, after the production of berkeleydione. Especially prhC might be a multifunctional enzyme that catalyzes the D-ring expansion via intramolecular methoxy rearrangement, as well as the hydrolysis of the expanded D-ring. The polypeptide is Isomerase prhC (Penicillium brasilianum).